The primary structure comprises 288 residues: Male determiner protein Nix (288 aa).

RRM domains lie at 19 to 94, 108 to 179, and 205 to 282; these read YCIY…LPLS, IVVY…KVER, and RSIG…FVPE.

Its function is as follows. Male determiner protein (M-factor) that controls male somatic sexual differentiation. Acts as a dominant factor that regulates the mRNA splicing of doublesex (dsx) or fruitless (fru) transcripts and promotes expression of male splice forms of dsx and fru. This chain is Male determiner protein Nix, found in Aedes aegypti (Yellowfever mosquito).